The primary structure comprises 129 residues: Ribosome-binding factor A (129 aa).

It belongs to the RbfA family. Monomer. Binds 30S ribosomal subunits, but not 50S ribosomal subunits or 70S ribosomes.

Its subcellular location is the cytoplasm. One of several proteins that assist in the late maturation steps of the functional core of the 30S ribosomal subunit. Associates with free 30S ribosomal subunits (but not with 30S subunits that are part of 70S ribosomes or polysomes). Required for efficient processing of 16S rRNA. May interact with the 5'-terminal helix region of 16S rRNA. The protein is Ribosome-binding factor A of Stutzerimonas stutzeri (strain A1501) (Pseudomonas stutzeri).